The sequence spans 1551 residues: Dual oxidase 1 (1551 aa).

A signal peptide spans 1–21 (MAVYSAVAWILLFGVLASLGA). Topologically, residues 22–596 (QNPVSWEVQR…YFKGSGFGFG (575 aa)) are extracellular. Positions 26–593 (SWEVQRFDGW…VRDYFKGSGF (568 aa)) are peroxidase-like; mediates peroxidase activity. Asn-94, Asn-342, Asn-354, Asn-461, and Asn-534 each carry an N-linked (GlcNAc...) asparagine glycan. Residues 597 to 617 (LTIGTLCCFPLVSLLSAWIVA) form a helical membrane-spanning segment. Topologically, residues 618–1044 (RLRMRNFKRL…KRFIENYRRH (427 aa)) are cytoplasmic. 3 EF-hand domains span residues 815-850 (PQDM…FMKG), 851-886 (SPEE…FIEI), and 895-930 (QLAE…HDSD). Asp-828, Asp-830, Asn-832, Tyr-834, Glu-839, Asp-864, Asp-866, Asn-868, and Glu-875 together coordinate Ca(2+). The interaction with TXNDC11 stretch occupies residues 956 to 1248 (YISQEKICPS…GSFALIQMPR (293 aa)). A helical transmembrane segment spans residues 1045-1065 (IGCVAVFYTITGALFLERAYY). Residues 1066–1080 (YAFAAHHSGITDTTR) are Extracellular-facing. Residues 1081–1101 (VGIILSRGTAASISFMFSYIL) form a helical membrane-spanning segment. Residues 1087–1269 (RGTAASISFM…YVGDKLVSLS (183 aa)) form the Ferric oxidoreductase domain. The Cytoplasmic portion of the chain corresponds to 1102-1136 (LTMCRNLITFLRETFLNRYIPFDAAVDFHRFIAST). The chain crosses the membrane as a helical span at residues 1137-1157 (AIILTVLHSAGHVVNVYLFSI). The Extracellular segment spans residues 1158–1188 (SPLSVLSCLFPDLFHDDGSEFPQKYYWWFFQ). Residues 1189-1209 (TVPGLTGVLLLLALAIMYVFA) traverse the membrane as a helical segment. Topologically, residues 1210–1226 (SHHFRRRSFRGFWLTHH) are cytoplasmic. A helical transmembrane segment spans residues 1227–1247 (LYIFLYILLIIHGSFALIQMP). Arg-1248 is a topological domain (extracellular). A helical membrane pass occupies residues 1249–1269 (FHIFFLVPAIIYVGDKLVSLS). Positions 1270–1376 (RKKVEISVVK…DGPFGEGHQE (107 aa)) constitute an FAD-binding FR-type domain. At 1270 to 1551 (RKKVEISVVK…THFSHHYENF (282 aa)) the chain is on the cytoplasmic side.

In the N-terminal section; belongs to the peroxidase family. In terms of assembly, interacts with TXNDC11, TPO and CYBA. N-glycosylated. As to expression, expressed in thyrocytes (at protein level).

The protein resides in the apical cell membrane. The enzyme catalyses NADH + O2 + H(+) = H2O2 + NAD(+). The catalysed reaction is NADPH + O2 + H(+) = H2O2 + NADP(+). It participates in hormone biosynthesis; thyroid hormone biosynthesis. The NADPH oxidase activity is calcium-dependent. Peroxidase activity is inhibited by aminobenzohydrazide. Its function is as follows. Generates hydrogen peroxide which is required for the activity of thyroid peroxidase/TPO and lactoperoxidase/LPO. Plays a role in thyroid hormones synthesis and lactoperoxidase-mediated antimicrobial defense at the surface of mucosa. May have its own peroxidase activity through its N-terminal peroxidase-like domain. The sequence is that of Dual oxidase 1 (Duox1) from Rattus norvegicus (Rat).